A 434-amino-acid chain; its full sequence is MNIIVVGLSHKTAAVEIREKVAFAPTQMEKPLQAVVALPDITEAVIVSTCNRVEIYATTRDVAGGMARIKRFLADYHNVPLELLEKHLYSYHGEDATRHVFRVASSLDSMVVGEPQILGQIKTSYGYAAEYKSSGIILNRFLHKAFSVAKRVRTETKIASSAVSVAFAAVELAKKIFGELSDKTVLLIGAGEMCELAAKHFINTGVRGVMVTNRTYERAEKLAEEFDAKPVHFEALMETLPKADIILSSTGAPHFIIHEKDMEEVLRRRKHKPMFFIDIAVPRDIDPKVNNVENCYLYTVDDLNGVVATNLEQRKVEAAKAEAIVEQEIGQFFKWLSSLEVTPTIVALRTHFDEIRKAELSKTISGWKDLPPGAEKKLDALTNAIMNKLLHQPTSVLKRIDQGNRNDLYVDALRNLFDLEVGGESQDNMMELED.

Substrate is bound by residues 49–52 (TCNR), S109, 114–116 (EPQ), and Q120. C50 (nucleophile) is an active-site residue. Position 189–194 (189–194 (GAGEMC)) interacts with NADP(+).

Belongs to the glutamyl-tRNA reductase family. As to quaternary structure, homodimer.

It catalyses the reaction (S)-4-amino-5-oxopentanoate + tRNA(Glu) + NADP(+) = L-glutamyl-tRNA(Glu) + NADPH + H(+). It participates in porphyrin-containing compound metabolism; protoporphyrin-IX biosynthesis; 5-aminolevulinate from L-glutamyl-tRNA(Glu): step 1/2. Its function is as follows. Catalyzes the NADPH-dependent reduction of glutamyl-tRNA(Glu) to glutamate 1-semialdehyde (GSA). This is Glutamyl-tRNA reductase from Citrifermentans bemidjiense (strain ATCC BAA-1014 / DSM 16622 / JCM 12645 / Bem) (Geobacter bemidjiensis).